The chain runs to 410 residues: Acetate kinase (410 aa).

Residue asparagine 7 participates in Mg(2+) binding. Lysine 14 lines the ATP pocket. Arginine 88 lines the substrate pocket. Aspartate 145 acts as the Proton donor/acceptor in catalysis. Residues 203-207, 278-280, and 326-330 each bind ATP; these read HAGNG, DTR, and GIGEN. Glutamate 379 contributes to the Mg(2+) binding site.

It belongs to the acetokinase family. Homodimer. The cofactor is Mg(2+). Requires Mn(2+) as cofactor.

The protein localises to the cytoplasm. It catalyses the reaction acetate + ATP = acetyl phosphate + ADP. It participates in metabolic intermediate biosynthesis; acetyl-CoA biosynthesis; acetyl-CoA from acetate: step 1/2. Catalyzes the formation of acetyl phosphate from acetate and ATP. Can also catalyze the reverse reaction. The polypeptide is Acetate kinase (Chlorante-Aster yellows phytoplasma).